The primary structure comprises 208 residues: uncharacterized protein (208 aa).

Disordered regions lie at residues 1-78 (MDLF…SPTE) and 154-208 (RRRS…PRNY). The segment covering 40-51 (KNHKKAQPRRTT) has biased composition (basic residues). Over residues 179–197 (ANSSSPNPTATGSETSYGS) the composition is skewed to polar residues.

This is an uncharacterized protein from Caenorhabditis elegans.